A 409-amino-acid polypeptide reads, in one-letter code: Magnesium-protoporphyrin IX monomethyl ester [oxidative] cyclase, chloroplastic (409 aa).

2 disordered regions span residues 1 to 23 and 36 to 60; these read MAAEMALVKPISKFSSPKLSNPS and RMSASSSPPPPTTATSKSKKGTKKE. The N-terminal 36 residues, 1–36, are a transit peptide targeting the chloroplast; the sequence is MAAEMALVKPISKFSSPKLSNPSKFLSGRRFSTVIR. Residues 13 to 23 show a composition bias toward polar residues; the sequence is KFSSPKLSNPS.

This sequence belongs to the AcsF family. As to quaternary structure, part of the FLU-containing chloroplast membrane complex composed of FLU, CRD1, PORB, PORC, CHLP and HEMA1. Interacts with YCF54 in chloroplasts. Fe cation is required as a cofactor.

It is found in the plastid. It localises to the chloroplast inner membrane. The protein resides in the chloroplast thylakoid membrane. The enzyme catalyses Mg-protoporphyrin IX 13-monomethyl ester + 3 NADPH + 3 O2 + 2 H(+) = 3,8-divinyl protochlorophyllide a + 3 NADP(+) + 5 H2O. It functions in the pathway porphyrin-containing compound metabolism; chlorophyll biosynthesis. In terms of biological role, catalytic component of the MgProto monomethylester (MgProtoME) cyclase complex that catalyzes the formation of the isocyclic ring in chlorophyll biosynthesis. Mediates the cyclase reaction, which results in the formation of divinylprotochlorophyllide (Pchlide) characteristic of all chlorophylls from magnesium-protoporphyrin IX 13-monomethyl ester (MgPMME). This is Magnesium-protoporphyrin IX monomethyl ester [oxidative] cyclase, chloroplastic from Arabidopsis thaliana (Mouse-ear cress).